The following is a 119-amino-acid chain: Protein TusC (119 aa).

Belongs to the DsrF/TusC family. As to quaternary structure, heterohexamer, formed by a dimer of trimers. The hexameric TusBCD complex contains 2 copies each of TusB, TusC and TusD. The TusBCD complex interacts with TusE.

The protein resides in the cytoplasm. Functionally, part of a sulfur-relay system required for 2-thiolation of 5-methylaminomethyl-2-thiouridine (mnm(5)s(2)U) at tRNA wobble positions. The protein is Protein TusC of Pectobacterium carotovorum subsp. carotovorum (strain PC1).